Reading from the N-terminus, the 194-residue chain is Ribosome maturation factor RimM (194 aa).

In terms of domain architecture, PRC barrel spans 113–194 (DGEYYWIDLI…RIVADWGLDY (82 aa)).

This sequence belongs to the RimM family. As to quaternary structure, binds ribosomal protein uS19.

It localises to the cytoplasm. An accessory protein needed during the final step in the assembly of 30S ribosomal subunit, possibly for assembly of the head region. Essential for efficient processing of 16S rRNA. May be needed both before and after RbfA during the maturation of 16S rRNA. It has affinity for free ribosomal 30S subunits but not for 70S ribosomes. This chain is Ribosome maturation factor RimM, found in Leptothrix cholodnii (strain ATCC 51168 / LMG 8142 / SP-6) (Leptothrix discophora (strain SP-6)).